Reading from the N-terminus, the 272-residue chain is Glutamate racemase (272 aa).

Substrate contacts are provided by residues 16–17 and 48–49; these read DS and YG. Residue Cys79 is the Proton donor/acceptor of the active site. 80-81 contributes to the substrate binding site; that stretch reads NT. Cys191 (proton donor/acceptor) is an active-site residue. 192–193 provides a ligand contact to substrate; sequence TH.

It belongs to the aspartate/glutamate racemases family.

It catalyses the reaction L-glutamate = D-glutamate. It functions in the pathway cell wall biogenesis; peptidoglycan biosynthesis. Functionally, provides the (R)-glutamate required for cell wall biosynthesis. This is Glutamate racemase from Chlorobium phaeobacteroides (strain DSM 266 / SMG 266 / 2430).